The sequence spans 95 residues: Small ribosomal subunit protein uS19 (95 aa).

The disordered stretch occupies residues 76–95; it reads PTRRFGGHADKKAKKGELKK. Over residues 82–95 the composition is skewed to basic and acidic residues; it reads GHADKKAKKGELKK.

Belongs to the universal ribosomal protein uS19 family.

Protein S19 forms a complex with S13 that binds strongly to the 16S ribosomal RNA. In Thermotoga neapolitana (strain ATCC 49049 / DSM 4359 / NBRC 107923 / NS-E), this protein is Small ribosomal subunit protein uS19.